A 77-amino-acid chain; its full sequence is uncharacterized protein (77 aa).

Residues 1–10 (MFNNKGRRNV) are compositionally biased toward basic residues. A disordered region spans residues 1-21 (MFNNKGRRNVRNNEVRRNVPV). Basic and acidic residues predominate over residues 11-21 (RNNEVRRNVPV). One can recognise a TRAM domain in the interval 20–77 (PVKEGETYTVTIEDMGRGGDGIARVEGFVVFVPETQKGETVNVKITAVKSKFAFAEKI).

This is an uncharacterized protein from Methanocaldococcus jannaschii (strain ATCC 43067 / DSM 2661 / JAL-1 / JCM 10045 / NBRC 100440) (Methanococcus jannaschii).